A 427-amino-acid polypeptide reads, in one-letter code: 3-phosphoshikimate 1-carboxyvinyltransferase (427 aa).

3-phosphoshikimate-binding residues include K22, S23, and R27. Phosphoenolpyruvate is bound at residue K22. Residues G96 and R124 each contribute to the phosphoenolpyruvate site. 7 residues coordinate 3-phosphoshikimate: S169, S170, Q171, S197, D313, N336, and K340. Q171 contributes to the phosphoenolpyruvate binding site. The active-site Proton acceptor is the D313. Positions 344, 386, and 411 each coordinate phosphoenolpyruvate.

This sequence belongs to the EPSP synthase family. Monomer.

It localises to the cytoplasm. It carries out the reaction 3-phosphoshikimate + phosphoenolpyruvate = 5-O-(1-carboxyvinyl)-3-phosphoshikimate + phosphate. Its pathway is metabolic intermediate biosynthesis; chorismate biosynthesis; chorismate from D-erythrose 4-phosphate and phosphoenolpyruvate: step 6/7. In terms of biological role, catalyzes the transfer of the enolpyruvyl moiety of phosphoenolpyruvate (PEP) to the 5-hydroxyl of shikimate-3-phosphate (S3P) to produce enolpyruvyl shikimate-3-phosphate and inorganic phosphate. In Enterobacter sp. (strain 638), this protein is 3-phosphoshikimate 1-carboxyvinyltransferase.